The primary structure comprises 197 residues: Protein GrpE (197 aa).

Residues 1 to 39 (MSSKEQKTPEGQAPEEIIMDQHEEIEAVEPEASAEQVDP) are disordered.

Belongs to the GrpE family. In terms of assembly, homodimer.

Its subcellular location is the cytoplasm. Functionally, participates actively in the response to hyperosmotic and heat shock by preventing the aggregation of stress-denatured proteins, in association with DnaK and GrpE. It is the nucleotide exchange factor for DnaK and may function as a thermosensor. Unfolded proteins bind initially to DnaJ; upon interaction with the DnaJ-bound protein, DnaK hydrolyzes its bound ATP, resulting in the formation of a stable complex. GrpE releases ADP from DnaK; ATP binding to DnaK triggers the release of the substrate protein, thus completing the reaction cycle. Several rounds of ATP-dependent interactions between DnaJ, DnaK and GrpE are required for fully efficient folding. This is Protein GrpE from Escherichia coli O127:H6 (strain E2348/69 / EPEC).